Reading from the N-terminus, the 454-residue chain is Bifunctional protein GlmU (454 aa).

Positions 1 to 226 (MALNVVILAA…AIEVEGANNR (226 aa)) are pyrophosphorylase. UDP-N-acetyl-alpha-D-glucosamine-binding positions include 8-11 (LAAG), Lys-22, Gln-73, 78-79 (GT), 100-102 (YGD), Gly-137, Glu-151, Asn-166, and Asn-224. Asp-102 is a binding site for Mg(2+). Asn-224 contributes to the Mg(2+) binding site. Residues 227-247 (VQLAQLERAYQAREAEKLMIA) form a linker region. Positions 248–454 (GANLRDPSRI…GWQRPVKIKE (207 aa)) are N-acetyltransferase. Residues Arg-330 and Lys-348 each contribute to the UDP-N-acetyl-alpha-D-glucosamine site. The active-site Proton acceptor is the His-360. UDP-N-acetyl-alpha-D-glucosamine contacts are provided by Tyr-363 and Asn-374. Acetyl-CoA contacts are provided by residues Ala-377, 383–384 (NY), Ser-402, Ala-420, and Arg-437.

In the N-terminal section; belongs to the N-acetylglucosamine-1-phosphate uridyltransferase family. The protein in the C-terminal section; belongs to the transferase hexapeptide repeat family. Homotrimer. Mg(2+) serves as cofactor.

It is found in the cytoplasm. It catalyses the reaction alpha-D-glucosamine 1-phosphate + acetyl-CoA = N-acetyl-alpha-D-glucosamine 1-phosphate + CoA + H(+). The enzyme catalyses N-acetyl-alpha-D-glucosamine 1-phosphate + UTP + H(+) = UDP-N-acetyl-alpha-D-glucosamine + diphosphate. It functions in the pathway nucleotide-sugar biosynthesis; UDP-N-acetyl-alpha-D-glucosamine biosynthesis; N-acetyl-alpha-D-glucosamine 1-phosphate from alpha-D-glucosamine 6-phosphate (route II): step 2/2. The protein operates within nucleotide-sugar biosynthesis; UDP-N-acetyl-alpha-D-glucosamine biosynthesis; UDP-N-acetyl-alpha-D-glucosamine from N-acetyl-alpha-D-glucosamine 1-phosphate: step 1/1. It participates in bacterial outer membrane biogenesis; LPS lipid A biosynthesis. Catalyzes the last two sequential reactions in the de novo biosynthetic pathway for UDP-N-acetylglucosamine (UDP-GlcNAc). The C-terminal domain catalyzes the transfer of acetyl group from acetyl coenzyme A to glucosamine-1-phosphate (GlcN-1-P) to produce N-acetylglucosamine-1-phosphate (GlcNAc-1-P), which is converted into UDP-GlcNAc by the transfer of uridine 5-monophosphate (from uridine 5-triphosphate), a reaction catalyzed by the N-terminal domain. The sequence is that of Bifunctional protein GlmU from Shewanella sp. (strain MR-7).